The sequence spans 544 residues: Methionine--tRNA ligase (544 aa).

A 'HIGH' region motif is present at residues 10-20; sequence PYANGSLHLGH. Zn(2+) contacts are provided by Cys-141, Cys-144, Cys-153, and Cys-156. The 'KMSKS' region signature appears at 329 to 333; the sequence is KLSTS. Thr-332 contacts ATP.

The protein belongs to the class-I aminoacyl-tRNA synthetase family. MetG type 1 subfamily. As to quaternary structure, monomer. Requires Zn(2+) as cofactor.

The protein resides in the cytoplasm. The catalysed reaction is tRNA(Met) + L-methionine + ATP = L-methionyl-tRNA(Met) + AMP + diphosphate. Its function is as follows. Is required not only for elongation of protein synthesis but also for the initiation of all mRNA translation through initiator tRNA(fMet) aminoacylation. This is Methionine--tRNA ligase from Bacillus cereus (strain G9842).